The primary structure comprises 229 residues: Transmembrane emp24 domain-containing protein 5 (229 aa).

Residues Met-1 to Gly-27 form the signal peptide. Topologically, residues Phe-28–Asn-196 are lumenal. One can recognise a GOLD domain in the interval Lys-45–Leu-126. The helical transmembrane segment at Phe-197–Leu-217 threads the bilayer. Residues Lys-218–Thr-229 lie on the Cytoplasmic side of the membrane.

The protein belongs to the EMP24/GP25L family. Interacts with TMED9 and TMED10.

It localises to the endoplasmic reticulum membrane. The protein localises to the golgi apparatus. Its subcellular location is the cis-Golgi network membrane. It is found in the endoplasmic reticulum-Golgi intermediate compartment membrane. Functionally, potential role in vesicular protein trafficking, mainly in the early secretory pathway. Required for the maintenance of the Golgi apparatus; involved in protein exchange between Golgi stacks during assembly. Probably not required for COPI-vesicle-mediated retrograde transport. The sequence is that of Transmembrane emp24 domain-containing protein 5 (TMED5) from Homo sapiens (Human).